Consider the following 808-residue polypeptide: Protein NLP5 (808 aa).

Residues 56-68 (PTQDTSNSLSQMY) are compositionally biased toward polar residues. A disordered region spans residues 56-83 (PTQDTSNSLSQMYGQDCPERSSLEDQNQ). Positions 536 to 617 (NRVTEKKRTK…IDSVEGVSGH (82 aa)) constitute an RWP-RK domain. Positions 660–680 (SPGSSCSHSSSCSSETQVIKE) are disordered. Over residues 663–673 (SSCSHSSSCSS) the composition is skewed to low complexity. Positions 710 to 793 (FLRVKVSYEE…QTIKLLLQLS (84 aa)) constitute a PB1 domain.

The protein localises to the nucleus. Functionally, probable transcription factor. The chain is Protein NLP5 (NLP5) from Arabidopsis thaliana (Mouse-ear cress).